The following is a 561-amino-acid chain: 2-succinyl-5-enolpyruvyl-6-hydroxy-3-cyclohexene-1-carboxylate synthase (561 aa).

The protein belongs to the TPP enzyme family. MenD subfamily. In terms of assembly, homodimer. The cofactor is Mg(2+). Mn(2+) serves as cofactor. Requires thiamine diphosphate as cofactor.

The catalysed reaction is isochorismate + 2-oxoglutarate + H(+) = 5-enolpyruvoyl-6-hydroxy-2-succinyl-cyclohex-3-ene-1-carboxylate + CO2. It functions in the pathway quinol/quinone metabolism; 1,4-dihydroxy-2-naphthoate biosynthesis; 1,4-dihydroxy-2-naphthoate from chorismate: step 2/7. Its pathway is quinol/quinone metabolism; menaquinone biosynthesis. In terms of biological role, catalyzes the thiamine diphosphate-dependent decarboxylation of 2-oxoglutarate and the subsequent addition of the resulting succinic semialdehyde-thiamine pyrophosphate anion to isochorismate to yield 2-succinyl-5-enolpyruvyl-6-hydroxy-3-cyclohexene-1-carboxylate (SEPHCHC). This Proteus mirabilis (strain HI4320) protein is 2-succinyl-5-enolpyruvyl-6-hydroxy-3-cyclohexene-1-carboxylate synthase.